The chain runs to 163 residues: Putative pre-16S rRNA nuclease (163 aa).

It belongs to the YqgF nuclease family.

It is found in the cytoplasm. In terms of biological role, could be a nuclease involved in processing of the 5'-end of pre-16S rRNA. The sequence is that of Putative pre-16S rRNA nuclease from Rhodopseudomonas palustris (strain BisA53).